The following is a 914-amino-acid chain: MMPSQITRSSHSSLPEVAPASGDAAGVSEQTPQQARTVAFFASGELAVAFGRTSTAPAQDSVRLLSALQRELDKQQPSWPTVAQLCHSLAEVAKTEQGWHQLASEDQAPAPALKDLLERCIGRLADMPASHASHDSLSLACEGLRTARLHQSVARLTARPPALARAIPDLLALTHLDPETLGAEPPVVSSYTLFSHFVHTAKQRTAELNDSLQRQPEAVVSLLRSHADTLNDLETLPGALQALTENCQDAPACNELRELAEVVGALLQLLREHGILPRLEAISIEPGEAPAPGHEAAEPRLTRSQALLKAGGNLVRKFDAYGALAPMDDKGLLALMRTPAPHLSPDQMHAFLNKHVLHLTQEQRDIVSNTPLPFAPEGDIEARCGMGFDEKLRLALANGSLVLSEEQLARLGHLPSAATTTSDVVKTLLEKPSSALSEAERDMLGAIVQANGQGQLDAWRAHNEQLPAVLSRSGLPSDVKDELLSLNQSMNAELGTLKNGASFKSRILASPAMLLALAPLPLAVAFVSKDNSYSSSLVAHFTKNAVFMAGLMMNELTNARTNVDHGLNRYFVTVLANAIVAQPTFARNEHLLEQVGFGIATAVASGAATLGVFNRESIVAAFKLAKSKLSRQDTGNASIPEEDHLAVVRHFDVSEHFAQQMKVATELYKQDKSITDIMNSSLTYLGTKSSEFQARFESVDALRAGLQLAEGERKADPDFYTKLGLVALTASIGAALVMLMKSMVGKADYAADGVWCVSEMLKLAMNPEVDMQKAVQVFKEIVGLNLVMTGFLGVNKVWNFLDKGIKGYASGAAVLTAANLTLPGMVGEVAGAAAGKGLSYLTDKGKAAHQAGRAAASWAGNYVGTSRLGSAVGTLQTAIPGRIAGGQVVAGLYDRFRYLTGSHPTPAQQAAGEP.

A compositionally biased stretch (polar residues) spans 1–13 (MMPSQITRSSHSS). The disordered stretch occupies residues 1-31 (MMPSQITRSSHSSLPEVAPASGDAAGVSEQT).

The protein belongs to the HopW family.

It localises to the secreted. This Pseudomonas syringae pv. syringae (strain B728a) protein is Effector protein hopAE1 (hopAE1).